Reading from the N-terminus, the 883-residue chain is Coatomer subunit gamma (883 aa).

Residues 1 to 25 are disordered; the sequence is MNYFSLTSHKKHRGHPSAGPSNAYQ. 6 HEAT repeats span residues 69-106, 292-329, 331-364, 365-401, 404-439, and 476-513; these read REATDCFFAMTKLFQSKDVVLRRMVYLGIKELSSIAED, RMLSPAFSILQLFCSSPKATLRFAAVRTLNKVAMTHPA, VTTCNLDLEGLITDSNRSVATLAITTLLKTGAES, SVERLMKQISTFVAEISDEFKVVVVQAICALCTKYPR, TVLMNFLSGMLREEGGLEYKTSIVDTIITIIEENAD, and ATPSKYIRFIYNRVILESPIVRAAAVTAMAQFGASCPA.

Belongs to the COPG family. In terms of assembly, oligomeric complex that consists of at least the alpha, beta, beta', gamma, delta, epsilon and zeta subunits. Expressed in ovary, testis, testis tip, young spermatocytes, germ cells and follicle cells. Up-regulated expression within centrally to posteriorly located germarial cysts and in migrating follicle cells. Widespread expression in imaginal disks including eye-antennal disk, wing disk, third leg and haltere disk.

It is found in the cytoplasm. The protein localises to the golgi apparatus membrane. It localises to the cytoplasmic vesicle. The protein resides in the COPI-coated vesicle membrane. Its subcellular location is the endoplasmic reticulum. Functionally, the coatomer is a cytosolic protein complex that binds to dilysine motifs and reversibly associates with Golgi non-clathrin-coated vesicles, which further mediate biosynthetic protein transport from the ER, via the Golgi up to the trans Golgi network. Coatomer complex is required for budding from Golgi membranes, and is essential for the retrograde Golgi-to-ER transport of dilysine-tagged proteins. Required for limiting lipid storage in lipid droplets. Involved in the expansion of luminal extracellular matrices and apical membrane during tubulogenesis. Required in the tracheal epithelium for luminal protein secretion and diametric tube growth. In salivary glands, required for deposition of O-glycans and luminal extracellular matrix assembly. Required for epidermal morphogenesis and cuticle development. This is Coatomer subunit gamma from Drosophila melanogaster (Fruit fly).